Consider the following 717-residue polypeptide: Fatty acid oxidation complex subunit alpha (717 aa).

Residues 1–190 (MIHAGNAITV…KDGAVDAVVA (190 aa)) are enoyl-CoA hydratase/isomerase. Asp298 contributes to the substrate binding site. The 3-hydroxyacyl-CoA dehydrogenase stretch occupies residues 313–717 (HPVNQAAVLG…MAANNKKFYG (405 aa)). Residues Met326, Asp345, 402–404 (VTE), Lys409, and Ser431 contribute to the NAD(+) site. The active-site For 3-hydroxyacyl-CoA dehydrogenase activity is His452. Asn455 is a binding site for NAD(+). A substrate-binding site is contributed by Asn502.

In the N-terminal section; belongs to the enoyl-CoA hydratase/isomerase family. This sequence in the C-terminal section; belongs to the 3-hydroxyacyl-CoA dehydrogenase family. In terms of assembly, heterotetramer of two alpha chains (FadB) and two beta chains (FadA).

The catalysed reaction is a (3S)-3-hydroxyacyl-CoA + NAD(+) = a 3-oxoacyl-CoA + NADH + H(+). It carries out the reaction a (3S)-3-hydroxyacyl-CoA = a (2E)-enoyl-CoA + H2O. The enzyme catalyses a 4-saturated-(3S)-3-hydroxyacyl-CoA = a (3E)-enoyl-CoA + H2O. It catalyses the reaction (3S)-3-hydroxybutanoyl-CoA = (3R)-3-hydroxybutanoyl-CoA. The catalysed reaction is a (3Z)-enoyl-CoA = a 4-saturated (2E)-enoyl-CoA. It carries out the reaction a (3E)-enoyl-CoA = a 4-saturated (2E)-enoyl-CoA. It functions in the pathway lipid metabolism; fatty acid beta-oxidation. In terms of biological role, involved in the aerobic and anaerobic degradation of long-chain fatty acids via beta-oxidation cycle. Catalyzes the formation of 3-oxoacyl-CoA from enoyl-CoA via L-3-hydroxyacyl-CoA. It can also use D-3-hydroxyacyl-CoA and cis-3-enoyl-CoA as substrate. The protein is Fatty acid oxidation complex subunit alpha of Acinetobacter baumannii (strain SDF).